The sequence spans 71 residues: Beta-defensin 7 (71 aa).

The signal sequence occupies residues 1–22; sequence MRIHYVLFAFLLVLLSPFAAFS. A Pyrrolidone carboxylic acid modification is found at Gln23. The propeptide occupies 23–25; it reads QDI. 3 cysteine pairs are disulfide-bonded: Cys31/Cys58, Cys38/Cys52, and Cys42/Cys59.

This sequence belongs to the beta-defensin family. LAP/TAP subfamily.

Its subcellular location is the secreted. Functionally, has bactericidal activity. This is Beta-defensin 7 (Defb7) from Mus musculus (Mouse).